The chain runs to 220 residues: Ribose-5-phosphate isomerase A (220 aa).

Substrate contacts are provided by residues 25–28 (TGST), 80–83 (DGAD), and 93–96 (KGGG). Residue Glu-102 is the Proton acceptor of the active site. Lys-120 is a binding site for substrate.

The protein belongs to the ribose 5-phosphate isomerase family. Homodimer.

The catalysed reaction is aldehydo-D-ribose 5-phosphate = D-ribulose 5-phosphate. It functions in the pathway carbohydrate degradation; pentose phosphate pathway; D-ribose 5-phosphate from D-ribulose 5-phosphate (non-oxidative stage): step 1/1. Functionally, catalyzes the reversible conversion of ribose-5-phosphate to ribulose 5-phosphate. This Bacillus cereus (strain ATCC 14579 / DSM 31 / CCUG 7414 / JCM 2152 / NBRC 15305 / NCIMB 9373 / NCTC 2599 / NRRL B-3711) protein is Ribose-5-phosphate isomerase A.